The chain runs to 309 residues: 1,2-phenylacetyl-CoA epoxidase, subunit A (309 aa).

Residues arginine 33, glutamine 37, 103–106 (KYSS), asparagine 132, methionine 193, 202–204 (SPN), lysine 214, and asparagine 218 contribute to the substrate site.

In terms of assembly, forms a stable heterotetramer (dimer of heterodimers) with PaaC. The cofactor is Fe cation.

The enzyme catalyses phenylacetyl-CoA + NADPH + O2 + H(+) = 2-(1,2-epoxy-1,2-dihydrophenyl)acetyl-CoA + NADP(+) + H2O. Its pathway is aromatic compound metabolism; phenylacetate degradation. Functionally, component of 1,2-phenylacetyl-CoA epoxidase multicomponent enzyme system which catalyzes the reduction of phenylacetyl-CoA (PA-CoA) to form 1,2-epoxyphenylacetyl-CoA. The subunit A is the catalytic subunit involved in the incorporation of one atom of molecular oxygen into phenylacetyl-CoA. In Escherichia coli (strain K12), this protein is 1,2-phenylacetyl-CoA epoxidase, subunit A (paaA).